The following is a 362-amino-acid chain: Phosphoserine aminotransferase (362 aa).

Residues S9 and R42 each coordinate L-glutamate. Pyridoxal 5'-phosphate contacts are provided by residues 76–77 (GR), W102, T153, D174, and Q197. The residue at position 198 (K198) is an N6-(pyridoxal phosphate)lysine. Residue 239–240 (NT) coordinates pyridoxal 5'-phosphate.

It belongs to the class-V pyridoxal-phosphate-dependent aminotransferase family. SerC subfamily. Homodimer. Pyridoxal 5'-phosphate serves as cofactor.

The protein resides in the cytoplasm. It catalyses the reaction O-phospho-L-serine + 2-oxoglutarate = 3-phosphooxypyruvate + L-glutamate. The enzyme catalyses 4-(phosphooxy)-L-threonine + 2-oxoglutarate = (R)-3-hydroxy-2-oxo-4-phosphooxybutanoate + L-glutamate. The protein operates within amino-acid biosynthesis; L-serine biosynthesis; L-serine from 3-phospho-D-glycerate: step 2/3. Its pathway is cofactor biosynthesis; pyridoxine 5'-phosphate biosynthesis; pyridoxine 5'-phosphate from D-erythrose 4-phosphate: step 3/5. In terms of biological role, catalyzes the reversible conversion of 3-phosphohydroxypyruvate to phosphoserine and of 3-hydroxy-2-oxo-4-phosphonooxybutanoate to phosphohydroxythreonine. The protein is Phosphoserine aminotransferase of Enterobacter sp. (strain 638).